The sequence spans 469 residues: Adenosylhomocysteinase (469 aa).

3 residues coordinate substrate: Thr58, Asp133, and Glu195. 196 to 198 serves as a coordination point for NAD(+); sequence TTT. Residues Lys225 and Asp229 each coordinate substrate. NAD(+) is bound by residues Asn230, 259–264, Glu282, Asn317, 338–340, and Asn383; these read GFGDVG and IGH.

The protein belongs to the adenosylhomocysteinase family. It depends on NAD(+) as a cofactor.

The protein resides in the cytoplasm. The enzyme catalyses S-adenosyl-L-homocysteine + H2O = L-homocysteine + adenosine. It participates in amino-acid biosynthesis; L-homocysteine biosynthesis; L-homocysteine from S-adenosyl-L-homocysteine: step 1/1. Functionally, may play a key role in the regulation of the intracellular concentration of adenosylhomocysteine. This Rhodopseudomonas palustris (strain TIE-1) protein is Adenosylhomocysteinase.